Consider the following 440-residue polypeptide: Xylose isomerase (440 aa).

Mg(2+) is bound by residues Asp307 and Asp309.

The protein belongs to the xylose isomerase family. Homotetramer. Mg(2+) is required as a cofactor.

It is found in the cytoplasm. The catalysed reaction is alpha-D-xylose = alpha-D-xylulofuranose. The polypeptide is Xylose isomerase (Pectobacterium carotovorum subsp. carotovorum (strain PC1)).